The sequence spans 456 residues: UPF0496 protein 4 (456 aa).

A helical membrane pass occupies residues 205–221 (SVTVFVCSIFVAVLSGS).

It belongs to the ROH1 family.

The protein resides in the membrane. The sequence is that of UPF0496 protein 4 from Oryza sativa subsp. indica (Rice).